Here is a 209-residue protein sequence, read N- to C-terminus: V-type ATP synthase subunit D (209 aa).

It belongs to the V-ATPase D subunit family.

Functionally, produces ATP from ADP in the presence of a proton gradient across the membrane. The chain is V-type ATP synthase subunit D from Anaeromyxobacter dehalogenans (strain 2CP-1 / ATCC BAA-258).